The following is a 335-amino-acid chain: Prepilin leader peptidase/N-methyltransferase (335 aa).

Residues 13–33 (LFAVFLFVLGLCVGSFLNVVI) form a helical membrane-spanning segment. C49, C52, C74, and C77 together coordinate Zn(2+). 5 consecutive transmembrane segments (helical) span residues 105–125 (WTYELVPALVLVSLLVPLAFI), 131–151 (ILPLSMTVPGMLAGIALAFPL), 206–226 (LLGVLLFASMQGAVVGILMLL), 258–278 (PGLPLWKRLLLVPVCLLVQPI), and 299–319 (IPFGPWLALAGLELLLLGPWL).

The protein belongs to the peptidase A24 family. Zn(2+) serves as cofactor.

It is found in the cell inner membrane. The catalysed reaction is Typically cleaves a -Gly-|-Phe- bond to release an N-terminal, basic peptide of 5-8 residues from type IV prepilin, and then N-methylates the new N-terminal amino group, the methyl donor being S-adenosyl-L-methionine.. In terms of biological role, plays an essential role in type IV pili and type II pseudopili formation by proteolytically removing the leader sequence from substrate proteins and subsequently monomethylating the alpha-amino group of the newly exposed N-terminal phenylalanine. In Myxococcus xanthus (strain DK1622), this protein is Prepilin leader peptidase/N-methyltransferase (pilD).